Reading from the N-terminus, the 633-residue chain is Threonine--tRNA ligase (633 aa).

The TGS domain maps to 1–61; it reads MINITLPDGS…DHDASLRIIT (61 aa). The segment at 243–534 is catalytic; that stretch reads DHRRIGKQQD…LIEHHAGQFP (292 aa). Zn(2+) is bound by residues Cys334, His385, and His511.

The protein belongs to the class-II aminoacyl-tRNA synthetase family. As to quaternary structure, homodimer. Zn(2+) serves as cofactor.

Its subcellular location is the cytoplasm. It carries out the reaction tRNA(Thr) + L-threonine + ATP = L-threonyl-tRNA(Thr) + AMP + diphosphate + H(+). Catalyzes the attachment of threonine to tRNA(Thr) in a two-step reaction: L-threonine is first activated by ATP to form Thr-AMP and then transferred to the acceptor end of tRNA(Thr). Also edits incorrectly charged L-seryl-tRNA(Thr). This Stenotrophomonas maltophilia (strain R551-3) protein is Threonine--tRNA ligase.